Consider the following 140-residue polypeptide: ATP synthase epsilon chain (140 aa).

It belongs to the ATPase epsilon chain family. As to quaternary structure, F-type ATPases have 2 components, CF(1) - the catalytic core - and CF(0) - the membrane proton channel. CF(1) has five subunits: alpha(3), beta(3), gamma(1), delta(1), epsilon(1). CF(0) has three main subunits: a, b and c.

The protein localises to the cell inner membrane. Functionally, produces ATP from ADP in the presence of a proton gradient across the membrane. This is ATP synthase epsilon chain from Colwellia maris.